Reading from the N-terminus, the 132-residue chain is Small ribosomal subunit protein uS8 (132 aa).

This sequence belongs to the universal ribosomal protein uS8 family. In terms of assembly, part of the 30S ribosomal subunit. Contacts proteins S5 and S12.

Functionally, one of the primary rRNA binding proteins, it binds directly to 16S rRNA central domain where it helps coordinate assembly of the platform of the 30S subunit. This is Small ribosomal subunit protein uS8 from Clostridioides difficile (strain 630) (Peptoclostridium difficile).